The chain runs to 223 residues: Urease accessory protein UreF (223 aa).

Belongs to the UreF family. UreD, UreF and UreG form a complex that acts as a GTP-hydrolysis-dependent molecular chaperone, activating the urease apoprotein by helping to assemble the nickel containing metallocenter of UreC. The UreE protein probably delivers the nickel.

The protein resides in the cytoplasm. In terms of biological role, required for maturation of urease via the functional incorporation of the urease nickel metallocenter. The chain is Urease accessory protein UreF from Rhizobium johnstonii (strain DSM 114642 / LMG 32736 / 3841) (Rhizobium leguminosarum bv. viciae).